A 186-amino-acid polypeptide reads, in one-letter code: MKISAFDIRPGNILEYEKGLWRVLKTDFVKPGKGGAFVQVEMKNIETGTKSNTRFRSGEAMEKAVVEPRTMQYLYADATGYVFMDNENFEQLILSEDLLEGQTGYLLPNTEIQVNLHNERPIGVELPPVVILEVREAEPSIKGQTATGSYKSAQMETGITVMVPQFVNAGEKIRVNTVDGSYIDRA.

At Lys33 the chain carries N6-(3,6-diaminohexanoyl)-5-hydroxylysine.

The protein belongs to the elongation factor P family. May be beta-lysylated on the epsilon-amino group of Lys-33 by the combined action of EpmA and EpmB, and then hydroxylated on the C5 position of the same residue by EpmC (if this protein is present). Lysylation is critical for the stimulatory effect of EF-P on peptide-bond formation. The lysylation moiety may extend toward the peptidyltransferase center and stabilize the terminal 3-CCA end of the tRNA. Hydroxylation of the C5 position on Lys-33 may allow additional potential stabilizing hydrogen-bond interactions with the P-tRNA.

The protein localises to the cytoplasm. It functions in the pathway protein biosynthesis; polypeptide chain elongation. Functionally, involved in peptide bond synthesis. Alleviates ribosome stalling that occurs when 3 or more consecutive Pro residues or the sequence PPG is present in a protein, possibly by augmenting the peptidyl transferase activity of the ribosome. Modification of Lys-33 is required for alleviation. The polypeptide is Elongation factor P (Acidithiobacillus ferrooxidans (strain ATCC 23270 / DSM 14882 / CIP 104768 / NCIMB 8455) (Ferrobacillus ferrooxidans (strain ATCC 23270))).